The following is a 229-amino-acid chain: Heptaprenylglyceryl phosphate synthase (229 aa).

K12 contributes to the sn-glycerol 1-phosphate binding site. Mg(2+) contacts are provided by D14 and T40. Residues Y159–G164, G189, and G209–N210 contribute to the sn-glycerol 1-phosphate site.

It belongs to the GGGP/HepGP synthase family. Group I subfamily. Homodimer. The cofactor is Mg(2+).

The enzyme catalyses sn-glycerol 1-phosphate + all-trans-heptaprenyl diphosphate = 3-heptaprenyl-sn-glycero-1-phosphate + diphosphate. It participates in membrane lipid metabolism; glycerophospholipid metabolism. In terms of biological role, prenyltransferase that catalyzes in vivo the transfer of the heptaprenyl moiety of heptaprenyl pyrophosphate (HepPP; 35 carbon atoms) to the C3 hydroxyl of sn-glycerol-1-phosphate (G1P), producing heptaprenylglyceryl phosphate (HepGP). This reaction is an ether-bond-formation step in the biosynthesis of archaea-type G1P-based membrane lipids found in Bacillales. The chain is Heptaprenylglyceryl phosphate synthase from Oceanobacillus iheyensis (strain DSM 14371 / CIP 107618 / JCM 11309 / KCTC 3954 / HTE831).